Here is a 404-residue protein sequence, read N- to C-terminus: ATP phosphoribosyltransferase regulatory subunit (404 aa).

It belongs to the class-II aminoacyl-tRNA synthetase family. HisZ subfamily. Heteromultimer composed of HisG and HisZ subunits.

It is found in the cytoplasm. It participates in amino-acid biosynthesis; L-histidine biosynthesis; L-histidine from 5-phospho-alpha-D-ribose 1-diphosphate: step 1/9. Functionally, required for the first step of histidine biosynthesis. May allow the feedback regulation of ATP phosphoribosyltransferase activity by histidine. This is ATP phosphoribosyltransferase regulatory subunit from Trichormus variabilis (strain ATCC 29413 / PCC 7937) (Anabaena variabilis).